The chain runs to 206 residues: IMPACT family member HI_0722 (206 aa).

Belongs to the IMPACT family.

The polypeptide is IMPACT family member HI_0722 (Haemophilus influenzae (strain ATCC 51907 / DSM 11121 / KW20 / Rd)).